The primary structure comprises 646 residues: Threonine--tRNA ligase (646 aa).

A TGS domain is found at methionine 1–threonine 63. The interval aspartate 244–proline 541 is catalytic. Residues cysteine 337, histidine 388, and histidine 518 each coordinate Zn(2+).

It belongs to the class-II aminoacyl-tRNA synthetase family. In terms of assembly, homodimer. Zn(2+) serves as cofactor.

The protein localises to the cytoplasm. The catalysed reaction is tRNA(Thr) + L-threonine + ATP = L-threonyl-tRNA(Thr) + AMP + diphosphate + H(+). Catalyzes the attachment of threonine to tRNA(Thr) in a two-step reaction: L-threonine is first activated by ATP to form Thr-AMP and then transferred to the acceptor end of tRNA(Thr). Also edits incorrectly charged L-seryl-tRNA(Thr). The protein is Threonine--tRNA ligase of Oceanobacillus iheyensis (strain DSM 14371 / CIP 107618 / JCM 11309 / KCTC 3954 / HTE831).